The following is a 77-amino-acid chain: Conotoxin PnMEKL-04 (77 aa).

The first 19 residues, 1-19, serve as a signal peptide directing secretion; it reads MEKLTILLLVAAVLMSTQA. The propeptide occupies 20–45; it reads LPQGGGENRLKENIKFLLKRKTAADR. 3 disulfide bridges follow: C51–C65, C58–C69, and C64–C73.

The protein belongs to the conotoxin O2 superfamily. Expressed by the venom duct.

It is found in the secreted. This is Conotoxin PnMEKL-04 from Conus pennaceus (Feathered cone).